A 229-amino-acid polypeptide reads, in one-letter code: PKHD-type hydroxylase RPA3479 (229 aa).

In terms of domain architecture, Fe2OG dioxygenase spans glutamine 78–serine 180. 3 residues coordinate Fe cation: histidine 98, aspartate 100, and histidine 161. Arginine 171 is a 2-oxoglutarate binding site.

Fe(2+) is required as a cofactor. Requires L-ascorbate as cofactor.

The sequence is that of PKHD-type hydroxylase RPA3479 from Rhodopseudomonas palustris (strain ATCC BAA-98 / CGA009).